Here is a 438-residue protein sequence, read N- to C-terminus: Enolase (438 aa).

Gln-163 provides a ligand contact to (2R)-2-phosphoglycerate. Glu-205 (proton donor) is an active-site residue. Mg(2+)-binding residues include Asp-243, Glu-292, and Asp-319. Residues Lys-344, Arg-373, Ser-374, and Lys-395 each contribute to the (2R)-2-phosphoglycerate site. The Proton acceptor role is filled by Lys-344.

Belongs to the enolase family. Requires Mg(2+) as cofactor.

Its subcellular location is the cytoplasm. It is found in the secreted. The protein resides in the cell surface. The catalysed reaction is (2R)-2-phosphoglycerate = phosphoenolpyruvate + H2O. The protein operates within carbohydrate degradation; glycolysis; pyruvate from D-glyceraldehyde 3-phosphate: step 4/5. In terms of biological role, catalyzes the reversible conversion of 2-phosphoglycerate (2-PG) into phosphoenolpyruvate (PEP). It is essential for the degradation of carbohydrates via glycolysis. The protein is Enolase of Streptococcus agalactiae.